Reading from the N-terminus, the 345-residue chain is MDSEDIPDFSSLKEETAYWKELSLKYKQSFQEARDELVEFQEGSRELEAELEAQLVQAEQRNRDLQADNQRLKYEVEALKEKLEHQYAQSYKQVSVLEDDLSQTRAIKEQLHKYVRELEQANDDLERAKRATIVSLEDFEQRLNQAIERNAFLESELDEKESLLVSVQRLKDEARDLRQELAVRERQQEVTRKSAPSSPTLDCEKMDSAVQASLSLPATPVGKGTENTFPSPKAIPNGFGTSPLTPSARISALNIVGDLLRKVGALESKLAACRNFAKDQASRKSYISGNVNCGVLNGNGTKFSRSGHTSFFDKGAVNGFDPAPPPPGLGSSRPSSAPGMLPLSV.

Residues 28–190 (QSFQEARDEL…LAVRERQQEV (163 aa)) adopt a coiled-coil conformation. The self-association stretch occupies residues 56–166 (VQAEQRNRDL…LDEKESLLVS (111 aa)). The tract at residues 64 to 189 (DLQADNQRLK…ELAVRERQQE (126 aa)) is interaction with KATNB1. The segment at 114 to 133 (YVRELEQANDDLERAKRATI) is required for interaction with PAFAH1B1. Residues 175–345 (RDLRQELAVR…SAPGMLPLSV (171 aa)) are interaction with CENPF. The tract at residues 189 to 256 (EVTRKSAPSS…SARISALNIV (68 aa)) is interaction with YWHAE. An interaction with NEFL region spans residues 191 to 345 (TRKSAPSSPT…SAPGMLPLSV (155 aa)). The interaction with KATNA1 stretch occupies residues 195–256 (APSSPTLDCE…SARISALNIV (62 aa)). At serine 215 the chain carries Phosphoserine. A Phosphothreonine; by CDK1 and MAPK1 modification is found at threonine 219. Serine 231 is modified (phosphoserine). The interval 241 to 280 (TSPLTPSARISALNIVGDLLRKVGALESKLAACRNFAKDQ) is interaction with DISC1. Serine 242 carries the phosphoserine; by CDK1 modification. Threonine 245 bears the Phosphothreonine; by CDK1 and MAPK1 mark. Residues 256–291 (VGDLLRKVGALESKLAACRNFAKDQASRKSYISGNV) are required for localization to the centrosome and interaction with dynein, dynactin, tubulin gamma, PCM1 and PCNT. The S-palmitoyl cysteine; by ZDHHC2, ZDHHC3 and ZDHHC7 moiety is linked to residue cysteine 273. The disordered stretch occupies residues 315–345 (GAVNGFDPAPPPPGLGSSRPSSAPGMLPLSV). A compositionally biased stretch (low complexity) spans 329-339 (LGSSRPSSAPG). Serine 344 carries the post-translational modification Phosphoserine.

This sequence belongs to the nudE family. In terms of assembly, self-associates. Interacts with DISC1, dynein, dynactin, tubulin gamma, KATNA1, KATNB1, microtubules, PAFAH1B1, PCM1, PCNT, and YWHAE. Interacts directly with NEFL and indirectly with NEFH. Interacts (via C-terminus) with CENPF. Interacts with ZNF365. Interacts with PLEKHM1 (via N- and C-terminus). Interacts with GTP-bound RAB9A; the interaction may lead to RAB9A-dynein motor tethering. In terms of processing, phosphorylated in mitosis. Can be phosphorylated by CDK1, CDK5 and MAPK1. Phosphorylation by CDK5 promotes interaction with KATNA1 and YWHAE. Post-translationally, palmitoylation at Cys-273 reduces affinity for dynein.

Its subcellular location is the cytoplasm. It is found in the cytoskeleton. The protein resides in the microtubule organizing center. The protein localises to the centrosome. It localises to the chromosome. Its subcellular location is the centromere. It is found in the kinetochore. The protein resides in the spindle. Functionally, required for organization of the cellular microtubule array and microtubule anchoring at the centrosome. May regulate microtubule organization at least in part by targeting the microtubule severing protein KATNA1 to the centrosome. Also positively regulates the activity of the minus-end directed microtubule motor protein dynein. May enhance dynein-mediated microtubule sliding by targeting dynein to the microtubule plus ends. Required for several dynein- and microtubule-dependent processes such as the maintenance of Golgi integrity, the centripetal motion of secretory vesicles and the coupling of the nucleus and centrosome. Also required during brain development for the migration of newly formed neurons from the ventricular/subventricular zone toward the cortical plate. Plays a role, together with DISC1, in the regulation of neurite outgrowth. Required for mitosis in some cell types but appears to be dispensible for mitosis in cortical neuronal progenitors, which instead requires NDE1. Facilitates the polymerization of neurofilaments from the individual subunits NEFH and NEFL. Positively regulates lysosome peripheral distribution and ruffled border formation in osteoclasts. Plays a role, together with DISC1, in the regulation of neurite outgrowth. May act as a RAB9A/B effector that tethers RAB9-associated late endosomes to the dynein motor for their retrograde transport to the trans-Golgi network. In Pongo abelii (Sumatran orangutan), this protein is Nuclear distribution protein nudE-like 1 (NDEL1).